The primary structure comprises 215 residues: Cytochrome b6 (215 aa).

A helical transmembrane segment spans residues 32–52 (IFYCLGGITLTCFLVQVATGF). Cys35 lines the heme c pocket. 2 residues coordinate heme b: His86 and His100. The next 3 membrane-spanning stretches (helical) occupy residues 90–110 (ASMMVLMMILHVFRVYLTGGF), 116–136 (LTWVTGVVLAVLTASFGVTGY), and 186–206 (LHTFVLPLLTAVFMLMHFPMI). Heme b-binding residues include His187 and His202.

It belongs to the cytochrome b family. PetB subfamily. In terms of assembly, the 4 large subunits of the cytochrome b6-f complex are cytochrome b6, subunit IV (17 kDa polypeptide, PetD), cytochrome f and the Rieske protein, while the 4 small subunits are PetG, PetL, PetM and PetN. The complex functions as a dimer. Heme b serves as cofactor. The cofactor is heme c.

It is found in the plastid. Its subcellular location is the chloroplast thylakoid membrane. Component of the cytochrome b6-f complex, which mediates electron transfer between photosystem II (PSII) and photosystem I (PSI), cyclic electron flow around PSI, and state transitions. This is Cytochrome b6 from Phalaenopsis aphrodite subsp. formosana (Moth orchid).